A 953-amino-acid chain; its full sequence is Protein ENHANCER OF LHP1 1 (953 aa).

WD repeat units lie at residues 15-55 (GGSA…TLPP), 60-99 (HHQD…FQTN), 102-143 (RFTL…RVLK), 144-183 (GHKG…VSFT), 192-232 (GFNT…KLFA), 236-275 (DHLE…DIDR), and 277-316 (KFEE…SMLS). 3 disordered regions span residues 347 to 370 (SESL…RKRL), 385 to 419 (EELN…GAFK), and 851 to 877 (ESKV…SATK). Residues 349–359 (SLDDAMGDSDD) are compositionally biased toward acidic residues. Positions 853 to 877 (KVQNPPASIQTSENTEAVMKSSATK) are enriched in polar residues. The short motif at 900-907 (TKKDKSDD) is the Nuclear localization signal element. The interval 919–953 (KNPVNNVNKEDKGQEKEVNQGEARRSSNPFLKSTV) is disordered. A compositionally biased stretch (basic and acidic residues) spans 926–943 (NKEDKGQEKEVNQGEARR). Residues 944-953 (SSNPFLKSTV) are compositionally biased toward polar residues.

Interacts with EZA1/SWN, LHP1, SLD5 and CLF in the nucleus. In terms of tissue distribution, expressed in root meristematic zones, initiating lateral roots, young leaves and the shoot apex.

The protein localises to the nucleus. Participates in maintaining the H3K27me3 mark at target genes by interacting with LHP1-PRC2 complexes during replication, thus contributing to H3K27me3 inheritance. The polypeptide is Protein ENHANCER OF LHP1 1 (Arabidopsis thaliana (Mouse-ear cress)).